Here is a 217-residue protein sequence, read N- to C-terminus: Putative threonylcarbamoyl-AMP synthase (217 aa).

In terms of domain architecture, YrdC-like spans 14 to 199 (SRGIVSAVGA…TPRVLRPGPV (186 aa)).

It belongs to the SUA5 family.

The protein localises to the cytoplasm. It carries out the reaction L-threonine + hydrogencarbonate + ATP = L-threonylcarbamoyladenylate + diphosphate + H2O. In terms of biological role, required for the formation of a threonylcarbamoyl group on adenosine at position 37 (t(6)A37) in tRNAs that read codons beginning with adenine. Catalyzes the conversion of L-threonine, HCO(3)(-)/CO(2) and ATP to give threonylcarbamoyl-AMP (TC-AMP) as the acyladenylate intermediate, with the release of diphosphate. This chain is Putative threonylcarbamoyl-AMP synthase, found in Mycobacterium tuberculosis (strain CDC 1551 / Oshkosh).